The chain runs to 501 residues: ATP synthase subunit alpha, chloroplastic (501 aa).

170–177 (GDRQTGKT) provides a ligand contact to ATP.

This sequence belongs to the ATPase alpha/beta chains family. F-type ATPases have 2 components, CF(1) - the catalytic core - and CF(0) - the membrane proton channel. CF(1) has five subunits: alpha(3), beta(3), gamma(1), delta(1), epsilon(1). CF(0) has four main subunits: a, b, b' and c.

The protein resides in the plastid. It localises to the chloroplast thylakoid membrane. It catalyses the reaction ATP + H2O + 4 H(+)(in) = ADP + phosphate + 5 H(+)(out). In terms of biological role, produces ATP from ADP in the presence of a proton gradient across the membrane. The alpha chain is a regulatory subunit. In Nephroselmis olivacea (Green alga), this protein is ATP synthase subunit alpha, chloroplastic.